The chain runs to 199 residues: Recombination protein RecR (199 aa).

Residues 58–73 form a C4-type zinc finger; that stretch reads CKKCFNLTSEDECEIC. Positions 81-175 constitute a Toprim domain; the sequence is KLICVVAETK…KVTRIAYGLP (95 aa).

The protein belongs to the RecR family.

May play a role in DNA repair. It seems to be involved in an RecBC-independent recombinational process of DNA repair. It may act with RecF and RecO. In Prochlorococcus marinus (strain MIT 9301), this protein is Recombination protein RecR.